A 505-amino-acid polypeptide reads, in one-letter code: MFS-type transporter oryN (505 aa).

The disordered stretch occupies residues 1-54; that stretch reads MAVAELPNIVSTDSSPSPHPGSRLSSEPTDIESQKAPSNAEPKTDPNLVTWDGP. 13 helical membrane-spanning segments follow: residues 69 to 89, 106 to 126, 135 to 155, 166 to 186, 193 to 213, 226 to 246, 280 to 300, 301 to 321, 337 to 357, 376 to 396, 401 to 421, 440 to 460, and 468 to 488; these read AFVT…SSIF, VVTL…PVWG, KWPM…VAVA, FLTG…LVDM, GVAM…APLM, FTQW…VFGL, GIKD…VTEP, ILLL…LVFV, ISAL…AIVV, LPLM…FAWT, IHWA…YMVF, IGAN…FGPF, and AWAS…PVLF.

This sequence belongs to the major facilitator superfamily. CAR1 family.

It is found in the membrane. Functionally, MFS-type transporter; part of the gene cluster that mediates the biosynthesis of oryzines, natural products with an unusual maleidride backbone. In Aspergillus oryzae (strain ATCC 42149 / RIB 40) (Yellow koji mold), this protein is MFS-type transporter oryN.